A 241-amino-acid polypeptide reads, in one-letter code: Venom nerve growth factor 2 (241 aa).

The first 18 residues, M1–A18, serve as a signal peptide directing secretion. Residues A19 to R125 constitute a propeptide that is removed on maturation. Positions G47 to Q67 are disordered. 3 disulfide bridges follow: C139–C203, C181–C231, and C191–C233.

It belongs to the NGF-beta family. In terms of assembly, homodimer; non-covalently linked. Expressed by the venom gland.

It is found in the secreted. Functionally, nerve growth factor is important for the development and maintenance of the sympathetic and sensory nervous systems. It stimulates division and differentiation of sympathetic and embryonic sensory neurons as well as basal forebrain cholinergic neurons in the brain. Its relevance in the snake venom is not clear. However, it has been shown to inhibit metalloproteinase-dependent proteolysis of platelet glycoprotein Ib alpha, suggesting a metalloproteinase inhibition to prevent metalloprotease autodigestion and/or protection against prey proteases. Binds a lipid between the two protein chains in the homodimer. The lipid-bound form promotes histamine relase from mouse mast cells, contrary to the lipid-free form. The protein is Venom nerve growth factor 2 of Naja sputatrix (Malayan spitting cobra).